We begin with the raw amino-acid sequence, 235 residues long: Phosphoribosylaminoimidazole-succinocarboxamide synthase (235 aa).

This sequence belongs to the SAICAR synthetase family.

The catalysed reaction is 5-amino-1-(5-phospho-D-ribosyl)imidazole-4-carboxylate + L-aspartate + ATP = (2S)-2-[5-amino-1-(5-phospho-beta-D-ribosyl)imidazole-4-carboxamido]succinate + ADP + phosphate + 2 H(+). It functions in the pathway purine metabolism; IMP biosynthesis via de novo pathway; 5-amino-1-(5-phospho-D-ribosyl)imidazole-4-carboxamide from 5-amino-1-(5-phospho-D-ribosyl)imidazole-4-carboxylate: step 1/2. This is Phosphoribosylaminoimidazole-succinocarboxamide synthase from Thermococcus kodakarensis (strain ATCC BAA-918 / JCM 12380 / KOD1) (Pyrococcus kodakaraensis (strain KOD1)).